We begin with the raw amino-acid sequence, 759 residues long: DNA replication licensing factor mcm-5 (759 aa).

Positions A330–I536 constitute an MCM domain. R370 contributes to the ADP binding site. The short motif at S511 to D514 is the Arginine finger element.

This sequence belongs to the MCM family. In terms of assembly, component of the mcm2-7 complex. The complex forms a toroidal hexameric ring with the proposed subunit order mcm2-mcm6-mcm4-mcm7-mcm3-mcm5 (By simililarity).

The protein resides in the nucleus. It is found in the cytoplasm. Its subcellular location is the cytosol. It carries out the reaction ATP + H2O = ADP + phosphate + H(+). Its function is as follows. Acts as a component of the MCM2-7 complex (MCM complex) which is the replicative helicase essential for 'once per cell cycle' DNA replication initiation and elongation in eukaryotic cells. Core component of CDC45-MCM-GINS (CMG) helicase, the molecular machine that unwinds template DNA during replication, and around which the replisome is built. The active ATPase sites in the MCM2-7 ring are formed through the interaction surfaces of two neighboring subunits such that a critical structure of a conserved arginine finger motif is provided in trans relative to the ATP-binding site of the Walker A box of the adjacent subunit. The six ATPase active sites, however, are likely to contribute differentially to the complex helicase activity. This is DNA replication licensing factor mcm-5 (mcm-5) from Caenorhabditis elegans.